The chain runs to 392 residues: Phosphoglycerate kinase (392 aa).

Residues 21 to 23, R36, 59 to 62, R113, and R146 contribute to the substrate site; these read DLN and HRGR. Residues K197, E314, and 340-343 each bind ATP; that span reads GGDT.

Belongs to the phosphoglycerate kinase family. In terms of assembly, monomer.

It is found in the cytoplasm. The catalysed reaction is (2R)-3-phosphoglycerate + ATP = (2R)-3-phospho-glyceroyl phosphate + ADP. Its pathway is carbohydrate degradation; glycolysis; pyruvate from D-glyceraldehyde 3-phosphate: step 2/5. The sequence is that of Phosphoglycerate kinase from Vesicomyosocius okutanii subsp. Calyptogena okutanii (strain HA).